The following is an 803-amino-acid chain: Lon protease (803 aa).

One can recognise a Lon N-terminal domain in the interval 9 to 202; it reads MPVLPLRDVV…YLLGMMESEA (194 aa). 356–363 provides a ligand contact to ATP; sequence GPPGVGKT. Positions 592–773 constitute a Lon proteolytic domain; the sequence is QNRIGEVTGL…DEVLGFALEN (182 aa). Residues serine 679 and lysine 722 contribute to the active site.

Belongs to the peptidase S16 family. In terms of assembly, homohexamer. Organized in a ring with a central cavity.

Its subcellular location is the cytoplasm. The enzyme catalyses Hydrolysis of proteins in presence of ATP.. In terms of biological role, ATP-dependent serine protease that mediates the selective degradation of mutant and abnormal proteins as well as certain short-lived regulatory proteins. Required for cellular homeostasis and for survival from DNA damage and developmental changes induced by stress. Degrades polypeptides processively to yield small peptide fragments that are 5 to 10 amino acids long. Binds to DNA in a double-stranded, site-specific manner. This is Lon protease from Haemophilus influenzae (strain ATCC 51907 / DSM 11121 / KW20 / Rd).